A 287-amino-acid chain; its full sequence is Acetyl-coenzyme A carboxylase carboxyl transferase subunit beta (287 aa).

One can recognise a CoA carboxyltransferase N-terminal domain in the interval 25–287 (IWTKCSGCVQ…KLTQQSFSEK (263 aa)). C29, C32, C48, and C51 together coordinate Zn(2+). The C4-type zinc-finger motif lies at 29-51 (CSGCVQLLYTKELERNLQVCPKC).

It belongs to the AccD/PCCB family. As to quaternary structure, acetyl-CoA carboxylase is a heterohexamer composed of biotin carboxyl carrier protein (AccB), biotin carboxylase (AccC) and two subunits each of ACCase subunit alpha (AccA) and ACCase subunit beta (AccD). Requires Zn(2+) as cofactor.

The protein localises to the cytoplasm. The enzyme catalyses N(6)-carboxybiotinyl-L-lysyl-[protein] + acetyl-CoA = N(6)-biotinyl-L-lysyl-[protein] + malonyl-CoA. Its pathway is lipid metabolism; malonyl-CoA biosynthesis; malonyl-CoA from acetyl-CoA: step 1/1. In terms of biological role, component of the acetyl coenzyme A carboxylase (ACC) complex. Biotin carboxylase (BC) catalyzes the carboxylation of biotin on its carrier protein (BCCP) and then the CO(2) group is transferred by the transcarboxylase to acetyl-CoA to form malonyl-CoA. This is Acetyl-coenzyme A carboxylase carboxyl transferase subunit beta from Blochmanniella floridana.